A 419-amino-acid chain; its full sequence is Thymidine phosphorylase (419 aa).

It belongs to the thymidine/pyrimidine-nucleoside phosphorylase family. As to quaternary structure, homodimer.

The catalysed reaction is thymidine + phosphate = 2-deoxy-alpha-D-ribose 1-phosphate + thymine. In terms of biological role, the enzymes which catalyze the reversible phosphorolysis of pyrimidine nucleosides are involved in the degradation of these compounds and in their utilization as carbon and energy sources, or in the rescue of pyrimidine bases for nucleotide synthesis. The protein is Thymidine phosphorylase (deoA) of Mycoplasmoides pirum (Mycoplasma pirum).